The sequence spans 1164 residues: Shugoshin 2A (1164 aa).

Positions Leu-62–Asn-113 form a coiled coil. Disordered stretches follow at residues Ser-160–Arg-269, His-287–Arg-314, Arg-390–Arg-492, Thr-521–Thr-541, and Pro-917–Gly-992. Positions Ser-182 to Ser-198 are enriched in low complexity. Polar residues-rich tracts occupy residues Asp-238 to Glu-247 and Gln-288 to Asn-299. A compositionally biased stretch (basic and acidic residues) spans Arg-390–Ser-412. Positions Cys-443–Asn-472 are enriched in polar residues. A compositionally biased stretch (basic and acidic residues) spans Arg-525–Thr-541. Polar residues predominate over residues Gly-934 to Gly-948. Ser-1042 carries the phosphoserine modification. Residues Ile-1092–Arg-1164 form a disordered region. The span at Thr-1112–Thr-1125 shows a compositional bias: low complexity. Positions Asn-1126–His-1140 are enriched in polar residues.

The protein belongs to the shugoshin family. In terms of assembly, part of an astrin (SPAG5)-kinastrin (SKAP) complex containing KNSTRN, SPAG5, PLK1, DYNLL1 and SGO2A. Interacts with CDCA8. Interacts with PPP2CA. In terms of tissue distribution, ubiquitously expressed in proliferating cells. Highly expressed in the testis and oocytes.

It localises to the nucleus. Its subcellular location is the chromosome. The protein resides in the centromere. The protein localises to the kinetochore. Its function is as follows. Cooperates with PPP2CA to protect centromeric cohesin from separase-mediated cleavage in oocytes specifically during meiosis I. Has a crucial role in protecting REC8 at centromeres from cleavage by separase. During meiosis, protects centromeric cohesion complexes until metaphase II/anaphase II transition, preventing premature release of meiosis-specific REC8 cohesin complexes from anaphase I centromeres. Is thus essential for an accurate gametogenesis. May act by targeting PPP2CA to centromeres, thus leading to cohesin dephosphorylation. Essential for recruiting KIF2C to the inner centromere and for correcting defective kinetochore attachments. Involved in centromeric enrichment of AUKRB in prometaphase. This is Shugoshin 2A from Mus musculus (Mouse).